Here is a 229-residue protein sequence, read N- to C-terminus: (S)-2-haloacid dehalogenase 2 (229 aa).

Asp-10 (nucleophile) is an active-site residue. An (S)-2-haloacid contacts are provided by residues 11 to 12 (LY), Arg-41, and 118 to 119 (SN). Residues 175 to 180 (SSNAWD) are important for catalytic activity.

The protein belongs to the HAD-like hydrolase superfamily. S-2-haloalkanoic acid dehalogenase family.

The enzyme catalyses an (S)-2-haloacid + H2O = a (2R)-2-hydroxycarboxylate + a halide anion + H(+). It carries out the reaction (S)-2-chloropropanoate + H2O = (R)-lactate + chloride + H(+). In terms of biological role, catalyzes the hydrolytic dehalogenation of small (S)-2-haloalkanoic acids to yield the corresponding (R)-2-hydroxyalkanoic acids. Acts on acids of short chain lengths, C(2) to C(4), with inversion of configuration at C-2. Active with 2-halogenated carboxylic acids and converts only the S-isomer (or L-isomer) of 2-chloropropionic acid with inversion of configuration to produce R-lactate (or D-isomer). This is (S)-2-haloacid dehalogenase 2 from Pseudomonas sp. (strain CBS-3).